A 740-amino-acid chain; its full sequence is Polyribonucleotide nucleotidyltransferase (740 aa).

Mg(2+) is bound by residues Asp-492 and Asp-498. Residues 559 to 618 (PMVQTLEIQKEKIRDVIGLGGKVIKELCKTFDVEIDISENGEVKVWGNVGENVKKAVQSI) enclose the KH domain. Residues 628–696 (GDIFDGEVVK…HKNRVKLTLR (69 aa)) form the S1 motif domain.

It belongs to the polyribonucleotide nucleotidyltransferase family. It depends on Mg(2+) as a cofactor.

It localises to the cytoplasm. The catalysed reaction is RNA(n+1) + phosphate = RNA(n) + a ribonucleoside 5'-diphosphate. Functionally, involved in mRNA degradation. Catalyzes the phosphorolysis of single-stranded polyribonucleotides processively in the 3'- to 5'-direction. In Orientia tsutsugamushi (strain Boryong) (Rickettsia tsutsugamushi), this protein is Polyribonucleotide nucleotidyltransferase.